Here is a 588-residue protein sequence, read N- to C-terminus: Putative pentatricopeptide repeat-containing protein At5g52630 (588 aa).

PPR repeat units follow at residues 14-48, 49-79, 80-114, 115-149, 150-180, 181-215, 216-250, 251-281, 282-316, 317-351, and 352-386; these read NYNQ…GLSL, IPLV…SPQK, SSTT…NLRP, DDHV…GYDA, DVFV…MPQR, NVVT…NLAV, NDYS…SFDS, SSFV…VPVK, NLGI…GMKP, NFIT…RIEP, and TDKH…PTES. Residues 387-462 are type E motif; the sequence is VWGALLTSCT…ETGLSWVEER (76 aa). The type E(+) motif stretch occupies residues 463–493; it reads NKVHTFAAGERRHEKSKEIYEKLAELGEEME. Residues 494–588 are type DYW motif; it reads KAGYIADTSY…DGKCSCNDYW (95 aa).

It belongs to the PPR family. PCMP-H subfamily.

The sequence is that of Putative pentatricopeptide repeat-containing protein At5g52630 (PCMP-H52) from Arabidopsis thaliana (Mouse-ear cress).